Here is an 83-residue protein sequence, read N- to C-terminus: Small ribosomal subunit protein bS16 (83 aa).

The protein belongs to the bacterial ribosomal protein bS16 family.

The chain is Small ribosomal subunit protein bS16 from Borrelia duttonii (strain Ly).